We begin with the raw amino-acid sequence, 376 residues long: WW domain-binding protein 4 (376 aa).

Residues 11-42 (KFCDYCKCWIADNRPSVEFHERGKNHKENVAR) form a Matrin-type zinc finger. The span at 94–111 (PTVSPVISTVQPTPTSNQ) shows a compositional bias: polar residues. Disordered regions lie at residues 94 to 127 (PTVS…ASKG) and 192 to 324 (WEKP…ECLS). Over residues 114–123 (EKKKKKKKKE) the composition is skewed to basic residues. WW domains lie at 123–156 (EASK…KPEG) and 164–197 (TAAK…KPED). Positions 219 to 272 (EDAKSSDSHSDSEGEQKKAGEASTETKKLIIKFKEKNKSTEKRIGPEIQKEKST) are enriched in basic and acidic residues. A phosphoserine mark is found at Ser-228 and Ser-230. Residues 357–375 (KKRRLENGKSRNLRQRGDD) form an interaction with SNRNP200 region.

As to quaternary structure, component of the spliceosome B complex. Associated with U2 snRNPs. Binds splicing factors SNRPB, SNRPC and SF1. Interacts via the WW domains with the Pro-rich domains of KHDRBS1/SAM68. Interacts via the WW domains with the Pro-rich domains of WBP11. Interacts with SNRNP200.

Its subcellular location is the nucleus. The protein resides in the nucleus speckle. Involved in pre-mRNA splicing as a component of the spliceosome. May play a role in cross-intron bridging of U1 and U2 snRNPs in the mammalian A complex. In Mus musculus (Mouse), this protein is WW domain-binding protein 4 (Wbp4).